A 339-amino-acid chain; its full sequence is 5-dehydro-2-deoxygluconokinase (339 aa).

This sequence belongs to the carbohydrate kinase PfkB family.

It catalyses the reaction 5-dehydro-2-deoxy-D-gluconate + ATP = 6-phospho-5-dehydro-2-deoxy-D-gluconate + ADP + H(+). The protein operates within polyol metabolism; myo-inositol degradation into acetyl-CoA; acetyl-CoA from myo-inositol: step 5/7. Catalyzes the phosphorylation of 5-dehydro-2-deoxy-D-gluconate (2-deoxy-5-keto-D-gluconate or DKG) to 6-phospho-5-dehydro-2-deoxy-D-gluconate (DKGP). The polypeptide is 5-dehydro-2-deoxygluconokinase (Clostridium botulinum (strain Eklund 17B / Type B)).